A 226-amino-acid chain; its full sequence is Sugar fermentation stimulation protein homolog (226 aa).

It belongs to the SfsA family.

The protein is Sugar fermentation stimulation protein homolog of Clostridium beijerinckii (strain ATCC 51743 / NCIMB 8052) (Clostridium acetobutylicum).